Consider the following 643-residue polypeptide: Protein disulfide-isomerase A4 (643 aa).

The N-terminal stretch at 1 to 20 (MKLRKAWLLVLLLALTQLLA) is a signal peptide. Thioredoxin domains are found at residues 21–167 (AASA…EVSQ) and 167–299 (QPDW…EFLK). The segment at 24-58 (AEDAHEDASDSENPIEDDDDEEEDEEDEDDLEVKE) is disordered. Over residues 32 to 56 (SDSENPIEDDDDEEEDEEDEDDLEV) the composition is skewed to acidic residues. The short motif at 89-92 (CGHC) is the CXXC element. 2 disulfide bridges follow: C89/C92 and C204/C207. K364 is subject to N6-acetyllysine. Residues 503 to 634 (FKKGKLKPVI…LSKFIDEHAT (132 aa)) enclose the Thioredoxin 3 domain. The short motif at 553 to 556 (CGHC) is the CXXC element. C553 and C556 are oxidised to a cystine. Residues 640–643 (KEEL) carry the Prevents secretion from ER motif.

It belongs to the protein disulfide isomerase family. Part of a large chaperone multiprotein complex comprising DNAJB11, HSP90B1, HSPA5, HYOU, PDIA2, PDIA4, PDIA6, PPIB, SDF2L1, UGGT1 and very small amounts of ERP29, but not, or at very low levels, CALR nor CANX. Component of a complex containing at least CRELD2, MANF, MATN3 and PDIA4. O-glycosylated.

The protein resides in the endoplasmic reticulum lumen. It is found in the melanosome. The enzyme catalyses Catalyzes the rearrangement of -S-S- bonds in proteins.. In Rattus norvegicus (Rat), this protein is Protein disulfide-isomerase A4 (Pdia4).